Reading from the N-terminus, the 371-residue chain is Cysteine proteinase EP-B 1 (371 aa).

An N-terminal signal peptide occupies residues 1–28 (MGLLSKKLLVASMVAAVLAVAAVELCSA). Positions 29 to 133 (IPMEDKDLES…FMYAALNVSD (105 aa)) are cleaved as a propeptide — activation peptide. The N-linked (GlcNAc...) asparagine glycan is linked to N130. 3 disulfides stabilise this stretch: C155–C197, C189–C230, and C291–C343. The active site involves C158. Catalysis depends on residues H297 and N318.

Belongs to the peptidase C1 family.

In Hordeum vulgare (Barley), this protein is Cysteine proteinase EP-B 1.